The chain runs to 322 residues: Zinc finger C2HC domain-containing protein zchc-1A (322 aa).

2 consecutive C2HC/C3H-type zinc fingers follow at residues 9 to 38 (PTFPCPICDRRFIKSSLEKHESACRKLASL) and 119 to 148 (DYVQCEYCSRNFNAAAAERHIPFCREQATR). Positions 13, 16, 28, 32, 123, 126, 138, and 142 each coordinate Zn(2+). The span at 150 to 159 (QGGNLKSSGG) shows a compositional bias: polar residues. A disordered region spans residues 150–322 (QGGNLKSSGG…SRNNSRSRIF (173 aa)). Residues 174-220 (NEGKKQESSSRNGSAERKPTTRGRDGSLLRARRDDSNDITSRRKSLD) show a composition bias toward basic and acidic residues. 2 stretches are compositionally biased toward polar residues: residues 221 to 238 (TRTSLTTGQASNRHTSLS) and 264 to 274 (LQQSSTPQQRL). Low complexity predominate over residues 276 to 295 (TPASTTTTASRSGSRTSSRA). Residues 296 to 305 (CPRDDSRDSR) show a composition bias toward basic and acidic residues. Positions 311–322 (NNSRNNSRSRIF) are enriched in low complexity.

It belongs to the ZC2HC1 family. The cofactor is Zn(2+).

The chain is Zinc finger C2HC domain-containing protein zchc-1A from Caenorhabditis elegans.